A 571-amino-acid polypeptide reads, in one-letter code: Proline--tRNA ligase (571 aa).

It belongs to the class-II aminoacyl-tRNA synthetase family. ProS type 1 subfamily. In terms of assembly, homodimer.

Its subcellular location is the cytoplasm. It catalyses the reaction tRNA(Pro) + L-proline + ATP = L-prolyl-tRNA(Pro) + AMP + diphosphate. In terms of biological role, catalyzes the attachment of proline to tRNA(Pro) in a two-step reaction: proline is first activated by ATP to form Pro-AMP and then transferred to the acceptor end of tRNA(Pro). As ProRS can inadvertently accommodate and process non-cognate amino acids such as alanine and cysteine, to avoid such errors it has two additional distinct editing activities against alanine. One activity is designated as 'pretransfer' editing and involves the tRNA(Pro)-independent hydrolysis of activated Ala-AMP. The other activity is designated 'posttransfer' editing and involves deacylation of mischarged Ala-tRNA(Pro). The misacylated Cys-tRNA(Pro) is not edited by ProRS. In Ectopseudomonas mendocina (strain ymp) (Pseudomonas mendocina), this protein is Proline--tRNA ligase.